A 307-amino-acid polypeptide reads, in one-letter code: tRNA pseudouridine synthase B (307 aa).

Asp38 functions as the Nucleophile in the catalytic mechanism.

It belongs to the pseudouridine synthase TruB family. Type 1 subfamily.

It carries out the reaction uridine(55) in tRNA = pseudouridine(55) in tRNA. Responsible for synthesis of pseudouridine from uracil-55 in the psi GC loop of transfer RNAs. The chain is tRNA pseudouridine synthase B from Bacillus cereus (strain ZK / E33L).